The sequence spans 1257 residues: LIM domain kinase 1 (1257 aa).

A disordered region spans residues Met1–Pro24. The segment at Met1–Cys147 is interaction with LATS1. Positions Gly11–Pro24 are enriched in gly residues. LIM zinc-binding domains lie at Pro31–Asp93 and Ala94–Gln154. One can recognise a PDZ domain in the interval Leu174 to Pro274. One can recognise a Protein kinase domain in the interval Leu401–Leu686. ATP-binding positions include Leu407–Val415 and Lys430. Asp522 is a catalytic residue. 3 disordered regions span residues Leu552–Arg587, Gln759–Leu811, and Glu881–Arg900. Basic and acidic residues predominate over residues Gln794 to Leu811. Ser1000 bears the Phosphoserine mark. Disordered stretches follow at residues Ala1010–Leu1037, Ser1085–His1182, and Ala1212–Cys1257. Polar residues-rich tracts occupy residues Ser1085–His1095 and Arg1113–Val1125. 2 stretches are compositionally biased toward low complexity: residues Ser1126–Thr1137 and Thr1145–Gln1166.

This sequence belongs to the protein kinase superfamily. TKL Ser/Thr protein kinase family. Interacts with LATS1, and this interaction inhibits phosphorylation of tsr/cofilin. Phosphorylated on serine and/or threonine residues by ROCK1. Phosphorylated by PAK4 resulting in increased LIMK1 ability to phosphorylate cofilin. May be dephosphorylated and inactivated by SSH1. Expressed throughout the imaginal disks of the eye, leg and wing.

It is found in the cytoplasm. The protein resides in the cleavage furrow. The protein localises to the midbody. The enzyme catalyses L-seryl-[protein] + ATP = O-phospho-L-seryl-[protein] + ADP + H(+). It carries out the reaction L-threonyl-[protein] + ATP = O-phospho-L-threonyl-[protein] + ADP + H(+). Functionally, protein kinase which regulates actin filament dynamics. Phosphorylates and inactivates the actin binding/depolymerizing factor tsr/cofilin, thereby stabilizing the actin cytoskeleton. Modulation of actin cytoskeleton dynamics may be essential for imaginal disk morphogenesis and axon guidance. In Drosophila melanogaster (Fruit fly), this protein is LIM domain kinase 1 (LIMK1).